We begin with the raw amino-acid sequence, 355 residues long: MAVDFSMRQLLEAGAHFGHQSHRWNPKMQPYIFGTRNNIHIIDLAQTVPALHAALQAVSDTVARGGRVLFVGTKRQAADSIAEAAKRSAQYYVNSRWLGGMLTNWKTISGSIQRLRKVDETLEGGAVGLTKKERLMLTREKDKLEKALGGIKDMGGVPDLLFVIDTNKEQLAIKEAQRLGIPVAAIVDTNCNPDGISYIVPANDDAGRAIALYCDLIARAAIEGIGRGQGALGLDVGASEEPTAEELPPANDDVAVSVASDAIAPADVAALAESTEHFEQLAAPRGAPDDLTKLNGVGPQLVQKLNDAGVWHYWQIAAMQPEDVAKLDADLKLNGRFARDGWVEQSRAFVEASAA.

The protein belongs to the universal ribosomal protein uS2 family.

The sequence is that of Small ribosomal subunit protein uS2 from Methylorubrum extorquens (strain CM4 / NCIMB 13688) (Methylobacterium extorquens).